The chain runs to 310 residues: Methionyl-tRNA formyltransferase (310 aa).

Position 110-113 (110-113 (SVLP)) interacts with (6S)-5,6,7,8-tetrahydrofolate.

Belongs to the Fmt family.

It carries out the reaction L-methionyl-tRNA(fMet) + (6R)-10-formyltetrahydrofolate = N-formyl-L-methionyl-tRNA(fMet) + (6S)-5,6,7,8-tetrahydrofolate + H(+). Functionally, attaches a formyl group to the free amino group of methionyl-tRNA(fMet). The formyl group appears to play a dual role in the initiator identity of N-formylmethionyl-tRNA by promoting its recognition by IF2 and preventing the misappropriation of this tRNA by the elongation apparatus. The sequence is that of Methionyl-tRNA formyltransferase from Mycolicibacterium vanbaalenii (strain DSM 7251 / JCM 13017 / BCRC 16820 / KCTC 9966 / NRRL B-24157 / PYR-1) (Mycobacterium vanbaalenii).